The sequence spans 2180 residues: Genome polyprotein (2180 aa).

Disordered regions lie at residues 507–529, 624–679, 703–809, and 822–848; these read DGADHTPKIPKRNVVLPSGAKDP, QPQK…YPIQ, KRAK…NTLP, and SEVEDEVDGMTEEPIPERRPEITPPKM. The stretch at 573 to 624 forms a coiled coil; that stretch reads SKNQGLIRVLEQQLQDLNKRICPPGTSLFHFFDQQKSEMASLKEQIRLLKEQ. Composition is skewed to polar residues over residues 631-643 and 670-679; these read DTPSYQSSYQPFH and PSLFSQYPIQ. Positions 703–716 are enriched in basic and acidic residues; it reads KRAKKKLQKDEVKQ. Residues 759-771 are compositionally biased toward polar residues; the sequence is SEDTSSQSYISTE. Positions 784 to 807 are enriched in low complexity; that stretch reads SEESTQLSQLSSSSNDSPENNENT. The segment covering 822–832 has biased composition (acidic residues); the sequence is SEVEDEVDGMT. The CCHC-type zinc-finger motif lies at 1113–1126; sequence CFTCGKIGHFSRNC. D1227 acts as the For protease activity; shared with dimeric partner in catalysis. Mg(2+)-binding residues include D1480, D1543, and D1544. 3 disordered regions span residues 1824 to 1848, 2115 to 2145, and 2161 to 2180; these read RRTRSNSTKSKADSSQSTGSSYKLS, NIVKNSPRKRKGKAKSKSSTRNEKRRAKNKC, and YSTKPSTPSWTQDSSSEPCI. Polar residues predominate over residues 1828–1847; the sequence is SNSTKSKADSSQSTGSSYKL. The segment covering 2120 to 2145 has biased composition (basic residues); the sequence is SPRKRKGKAKSKSSTRNEKRRAKNKC. Polar residues predominate over residues 2163–2180; it reads TKPSTPSWTQDSSSEPCI.

The protein belongs to the Petuviruses genome polyprotein family.

The catalysed reaction is DNA(n) + a 2'-deoxyribonucleoside 5'-triphosphate = DNA(n+1) + diphosphate. Functionally, encodes presumably for at least four polypeptides: Movement protein (MP), capsid protein (CP), Protease (PR), and reverse transcriptase (RT). This Petunia (PVCV) protein is Genome polyprotein.